Here is a 195-residue protein sequence, read N- to C-terminus: Protein GrpE (195 aa).

It belongs to the GrpE family. In terms of assembly, homodimer.

It localises to the cytoplasm. Participates actively in the response to hyperosmotic and heat shock by preventing the aggregation of stress-denatured proteins, in association with DnaK and GrpE. It is the nucleotide exchange factor for DnaK and may function as a thermosensor. Unfolded proteins bind initially to DnaJ; upon interaction with the DnaJ-bound protein, DnaK hydrolyzes its bound ATP, resulting in the formation of a stable complex. GrpE releases ADP from DnaK; ATP binding to DnaK triggers the release of the substrate protein, thus completing the reaction cycle. Several rounds of ATP-dependent interactions between DnaJ, DnaK and GrpE are required for fully efficient folding. The protein is Protein GrpE of Francisella tularensis subsp. novicida (strain U112).